The following is a 365-amino-acid chain: Protein YIM1 (365 aa).

The protein belongs to the YIM1 family.

The protein localises to the lipid droplet. Its subcellular location is the mitochondrion. This is Protein YIM1 (YIM1) from Saccharomyces cerevisiae (strain RM11-1a) (Baker's yeast).